The following is a 609-amino-acid chain: MIQVLLVTICLAAFPYQGSSIILESGNVNDYEIVYPRKVTALPKGAVQPKYEDAMQYELKVSGEPVVLHLEKNKQLFSKDYSETHYSPDGREITTYPLVEDHCYYHGRIENDADSTASISACNGLKGHFKLQGEMYLIEPLKLPDSEAHAVYKYENVEKEDEALKMCGVTQNWESYEPIKKASQLVVTAEHQKYNPFRFVELFLVVDKAMVTKNNGDLDKIKTRMYEIVNTVNEIYRYMYIHVALVGLEIWSNEDKITVKPEAGYTLNAFGEWRKTDLLTRKKHDNAQLLTAIDLDRVIGLAYVGSMCHPKRSTGIIQDYSEINLVVAVIMAHEMGHNLGINHDSGYCSCGDYACIMRPEISPEPSTFFSNCSYFECWDFIMNHNPECILNEPLGTDIISPPVCGNELLEVGEECDCGTPENCQNECCDAATCKLKSGSQCGHGDCCEQCKFSKSGTECRASMSECDPAEHCTGQSSECPADVFHKNGQPCLDNYGYCYNGNCPIMYHQCYDLFGADVYEAEDSCFERNQKGNYYGYCRKENGNKIPCAPEDVKCGRLYCKDNSPGQNNPCKMFYSNEDEHKGMVLPGTKCADGKVCSNGHCVDVATAY.

The signal sequence occupies residues 1 to 20 (MIQVLLVTICLAAFPYQGSS). Positions 21 to 189 (IILESGNVND…KKASQLVVTA (169 aa)) are excised as a propeptide. Residues 198–393 (RFVELFLVVD…HNPECILNEP (196 aa)) form the Peptidase M12B domain. Residues glutamate 201 and aspartate 285 each contribute to the Ca(2+) site. Cystine bridges form between cysteine 308–cysteine 388, cysteine 348–cysteine 372, and cysteine 350–cysteine 355. Position 333 (histidine 333) interacts with Zn(2+). Glutamate 334 is an active-site residue. Histidine 337 and histidine 343 together coordinate Zn(2+). N-linked (GlcNAc...) asparagine glycosylation occurs at asparagine 371. Cysteine 388, asparagine 391, valine 403, asparagine 406, leucine 408, glutamate 410, glutamate 413, and aspartate 416 together coordinate Ca(2+). Positions 401 to 487 (PPVCGNELLE…ECPADVFHKN (87 aa)) constitute a Disintegrin domain. Intrachain disulfides connect cysteine 404–cysteine 433, cysteine 415–cysteine 428, cysteine 417–cysteine 423, cysteine 427–cysteine 450, cysteine 441–cysteine 447, cysteine 446–cysteine 472, cysteine 459–cysteine 479, cysteine 466–cysteine 498, cysteine 491–cysteine 503, cysteine 510–cysteine 560, cysteine 525–cysteine 571, cysteine 538–cysteine 548, cysteine 555–cysteine 597, and cysteine 591–cysteine 602. The D/ECD-tripeptide motif lies at 465 to 467 (ECD). The Ca(2+) site is built by aspartate 467, proline 468, glutamate 470, aspartate 482, and valine 483.

The protein belongs to the venom metalloproteinase (M12B) family. P-III subfamily. P-IIIa sub-subfamily. In terms of assembly, monomer. The cofactor is Zn(2+). Expressed by the venom gland.

It is found in the secreted. Functionally, snake venom metalloproteinase that impairs hemostasis in the envenomed animal. This Crotalus viridis viridis (Prairie rattlesnake) protein is Zinc metalloproteinase-disintegrin-like VMP-III.